The sequence spans 481 residues: Alkaline protease secretion protein AprF (481 aa).

The segment at 462 to 481 (PAPLHTLSKTDTEENRSALN) is disordered. Positions 469 to 481 (SKTDTEENRSALN) are enriched in basic and acidic residues.

It belongs to the outer membrane factor (OMF) (TC 1.B.17) family.

The protein resides in the cell outer membrane. Its function is as follows. Involved in the secretion of alkaline protease. In Pseudomonas aeruginosa (strain ATCC 15692 / DSM 22644 / CIP 104116 / JCM 14847 / LMG 12228 / 1C / PRS 101 / PAO1), this protein is Alkaline protease secretion protein AprF (aprF).